Consider the following 345-residue polypeptide: Mannonate dehydratase 2 (345 aa).

The protein belongs to the mannonate dehydratase family. Fe(2+) serves as cofactor. It depends on Mn(2+) as a cofactor.

It catalyses the reaction D-mannonate = 2-dehydro-3-deoxy-D-gluconate + H2O. Its pathway is carbohydrate metabolism; pentose and glucuronate interconversion. Functionally, catalyzes the dehydration of D-mannonate. The protein is Mannonate dehydratase 2 (uxuA2) of Halalkalibacterium halodurans (strain ATCC BAA-125 / DSM 18197 / FERM 7344 / JCM 9153 / C-125) (Bacillus halodurans).